The primary structure comprises 2136 residues: Protein CELLULOSE SYNTHASE INTERACTIVE 3 (2136 aa).

ARM repeat units follow at residues 27–66 (MEMD…LLGI), 71–111 (REAR…VLCK), 113–152 (KDLR…EVSS), 159–201 (HIGM…NLCG), 204–243 (DGYW…RLVL), 246–286 (CDSI…ALSA), 289–337 (DEAK…NVFG), 376–417 (PESS…SLYG), 419–458 (SSLS…GLCH), 461–500 (VGIW…ILTA), 503–542 (DDSK…NLCC), 545–584 (EEIR…KLVH), 586–618 (ADPA…HVLS), 619–663 (KASQ…DLFS), 666–705 (QDIC…ALSR), 711–750 (NNKK…NLLS), 752–791 (PDIA…QLLK), 811–848 (SLVD…FSYP), 849–887 (PWIA…RLCS), 936–980 (QLIT…GFLE), 1013–1041 (SVDA…YTSS), 1042–1083 (AQAE…TLAV), 1109–1149 (RGIN…SLVK), 1163–1204 (EDVR…RIAD), 1207–1247 (DTNK…VLFS), 1249–1288 (HELR…ELFD), 1290–1329 (ENIR…KLSS), 1333–1375 (SNTA…VVFS), 1377–1416 (KNIR…ILLD), 1418–1457 (EQHL…KLGK), 1460–1499 (VPRK…ILTN), 1518–1546 (AVLL…KQQT), 1547–1585 (LEAF…HFLT), 1587–1626 (EDFQ…KISA), 1628–1669 (WPKA…NILQ), 1670–1704 (YDAE…ALML), 1710–1750 (ASST…NNPR), 1790–1833 (SQHE…NFVM), 1836–1875 (RTNR…FLFS), 1921–1960 (PKLR…LLRH), 1969–2008 (VAKS…CLPG), and 2010–2035 (LTVN…QLTI). The C2 domain maps to 1989-2106 (KTCPPRFHDK…VTEGEYSGSL (118 aa)).

In terms of assembly, associates with cellulase synthase (CESA) complexes. Binds to cortical microtubules. Interacts with CESA3 and CESA6. Expressed in dark-grown hypocotyls, leaves (confined to vasculature and trichomes), stamen, pollen, developing siliques, and roots. Restricted in meristematic tissue of the shoot and root. Present in distinct punctae at the cell cortex, called microtubule-associated cellulose synthase compartments, that move with constant velocities of 10 to 3000 nm/min.

The protein localises to the cell membrane. The protein resides in the cytoplasm. It is found in the cytoskeleton. Its subcellular location is the endomembrane system. In terms of biological role, regulator of the microtubular cytoskeleton. Microtubule-associated protein involved in the association of cellulase synthase (CESA) complexes (CSCs) and cortical microtubules. Promotes dynamics of CSCs in the plasma membrane in both microtubules-dependent and microtubules-independent manners. Regulates primary cell wall biosynthesis and cellulose microfibrils organization. This Arabidopsis thaliana (Mouse-ear cress) protein is Protein CELLULOSE SYNTHASE INTERACTIVE 3.